A 217-amino-acid chain; its full sequence is Guanylate kinase (217 aa).

The Guanylate kinase-like domain occupies 15-194; that stretch reads GLMLVLSSPS…AYQRLKRILL (180 aa). ATP is bound at residue 22–29; it reads SPSGAGKT.

It belongs to the guanylate kinase family.

The protein resides in the cytoplasm. It carries out the reaction GMP + ATP = GDP + ADP. Its function is as follows. Essential for recycling GMP and indirectly, cGMP. This is Guanylate kinase from Hyphomonas neptunium (strain ATCC 15444).